The sequence spans 464 residues: Cysteine--tRNA ligase 1 (464 aa).

Position 28 (Cys28) interacts with Zn(2+). The 'HIGH' region signature appears at 30–40; sequence VTIYDLCHIGH. Zn(2+)-binding residues include Cys209, His234, and Glu238. The short motif at 266 to 270 is the 'KMSKS' region element; the sequence is KMSKS. Residue Lys269 coordinates ATP.

It belongs to the class-I aminoacyl-tRNA synthetase family. As to quaternary structure, monomer. Zn(2+) serves as cofactor.

It is found in the cytoplasm. It carries out the reaction tRNA(Cys) + L-cysteine + ATP = L-cysteinyl-tRNA(Cys) + AMP + diphosphate. The protein is Cysteine--tRNA ligase 1 of Photobacterium profundum (strain SS9).